The primary structure comprises 114 residues: RNA polymerase-binding protein RbpA (114 aa).

This sequence belongs to the RNA polymerase-binding protein RbpA family. As to quaternary structure, monomer. Forms a complex with the RNAP catalytic core, specifically with the beta subunit (RpoB); its binding site may overlap with that of Rif. May bind free principal sigma factors.

Its function is as follows. Binds to RNA polymerase (RNAP), probably stimulating transcriptions from principal, but not alternative sigma factor promoters. Partially restores transcription in the presence of rifampicin (Rif) in vitro; overexpression leads to an increase in the Rif tolerance in vivo, with smaller colonies. Seems to act by removing Rif from its binding site and preventing its further binding. No longer stimulates transcription in Rif-resistant RNA polymerase (with mutations in rpoB). This is RNA polymerase-binding protein RbpA from Mycolicibacterium smegmatis (strain ATCC 700084 / mc(2)155) (Mycobacterium smegmatis).